The sequence spans 367 residues: MDLSIPNPVADATHQAGGNPGGQPLEIDALIVGAGPVGLFQVFELGLLEIKAHIIDSLKVVGGQCVELYPDKPIYDIPAVPICTGQELTDNLLKQIEPFSPTFHLGQEVSVVERREDGRFFVETSLGTRFITKTIFIAAGVGSFQPRTLKVEGIDKFEGKQLFYRVKDPSRFHGRNLVVVGGGDSALDWTLDLVGKAESVVMIHRRDGFRAAPASVAKMRELCEQMEMQFMVGQIGGYEEKDGVLTEIKVTGADGVTRRMPVDDILVFFGLSPKLGPIAEWGLDLERKQIKVDTEKFETNIPGIFAVGDINTYPGKKKLILSGFHEAALAAFGAAPYIFPDKKIHMQYTTTSPKLHKVLGVETPVFD.

Residues aspartate 56, glutamine 64, tyrosine 69, valine 109, phenylalanine 144, aspartate 309, and threonine 350 each coordinate FAD.

Belongs to the ferredoxin--NADP reductase type 2 family. Homodimer. FAD is required as a cofactor.

It catalyses the reaction 2 reduced [2Fe-2S]-[ferredoxin] + NADP(+) + H(+) = 2 oxidized [2Fe-2S]-[ferredoxin] + NADPH. The polypeptide is Ferredoxin--NADP reductase 2 (Cupriavidus metallidurans (strain ATCC 43123 / DSM 2839 / NBRC 102507 / CH34) (Ralstonia metallidurans)).